The chain runs to 62 residues: U-stichotoxin-Hau1a (62 aa).

A signal peptide spans M1 to G21. Positions F22–R31 are excised as a propeptide. Residue P36 is modified to Hydroxyproline. Cystine bridges form between C41/C53 and C44/C59.

The protein belongs to the Hau1a/HC18/HC19 family.

The protein localises to the secreted. The protein resides in the nematocyst. Toxin that is lethal to crab. Does not produce the typical symptoms associated with sodium channel toxins in crabs, suggesting that it likely does not act on sodium channels. This chain is U-stichotoxin-Hau1a, found in Heteractis aurora (Banded sea anemone).